We begin with the raw amino-acid sequence, 308 residues long: MGAQLLTCTVSDSIRHQFSCFATSCCVLWVPKGVSTMLPPSQLGSQPPTSDPLSCQALLPRSLPGFTHMPPLSKFLVGLALRNALEEAGCWADVWALQLQLYRFGGVEATQALIRHLQELQKGGRADWKVSVNALSSALQLLAWEQAGPKRVKRSLSNMGCENEQEQRVHNVVELLPAVGTYYNLGTALYYAIKNCTDKAKERGRDGAIDLGYDLLMTMVGMSGGPTGAVITAALKPALKAGVQRLIRYYHDEEGVTTSQPETRKDAPTYRDDVEETTMSNLVSEVESTTSNWGRPLLKNYVFLAYKR.

This sequence belongs to the apolipoprotein F family.

The protein resides in the secreted. Its function is as follows. Minor apolipoprotein that associates with LDL. Inhibits cholesteryl ester transfer protein (CETP) activity and appears to be an important regulator of cholesterol transport. Also associates to a lesser degree with VLDL, Apo-AI and Apo-AII. The protein is Apolipoprotein F (Apof) of Rattus norvegicus (Rat).